The following is a 327-amino-acid chain: MSTVVEKSGEAKPGKVEVGVKLRGAEKVARIPVKIIPTEELPKKPDWIRVRIPVSPEVDRIKQLLRKHKLHSVCEEASCPNLGECFSGGTATFMIMGDICTRRCPFCDVGHGRPKPLDVDEPTNLAIAIADLRLKYVVITSVDRDDLRDGGAQHFADCLREIRKLSPGIQLETLVPDYRGRMDIALEITANEPPDVFNHNLETVPRLYRSSRPGSDFEWSLDLLQKFKQMVPHVPTKSGLMLGLGETDEEVIEVMQRMREHDIDMLTLGQYLQPSRNHLPVQRFVHPDTFAWFAEEGERMGFKNVASGPLVRSSYHADQQAHGNKIG.

Residues cysteine 74, cysteine 79, cysteine 85, cysteine 100, cysteine 104, cysteine 107, and serine 314 each contribute to the [4Fe-4S] cluster site. A Radical SAM core domain is found at 86–303; sequence FSGGTATFMI…AEEGERMGFK (218 aa).

This sequence belongs to the radical SAM superfamily. Lipoyl synthase family. Requires [4Fe-4S] cluster as cofactor.

The protein resides in the cytoplasm. The enzyme catalyses [[Fe-S] cluster scaffold protein carrying a second [4Fe-4S](2+) cluster] + N(6)-octanoyl-L-lysyl-[protein] + 2 oxidized [2Fe-2S]-[ferredoxin] + 2 S-adenosyl-L-methionine + 4 H(+) = [[Fe-S] cluster scaffold protein] + N(6)-[(R)-dihydrolipoyl]-L-lysyl-[protein] + 4 Fe(3+) + 2 hydrogen sulfide + 2 5'-deoxyadenosine + 2 L-methionine + 2 reduced [2Fe-2S]-[ferredoxin]. Its pathway is protein modification; protein lipoylation via endogenous pathway; protein N(6)-(lipoyl)lysine from octanoyl-[acyl-carrier-protein]: step 2/2. Catalyzes the radical-mediated insertion of two sulfur atoms into the C-6 and C-8 positions of the octanoyl moiety bound to the lipoyl domains of lipoate-dependent enzymes, thereby converting the octanoylated domains into lipoylated derivatives. The sequence is that of Lipoyl synthase from Pseudomonas paraeruginosa (strain DSM 24068 / PA7) (Pseudomonas aeruginosa (strain PA7)).